The following is a 443-amino-acid chain: Probable glycine dehydrogenase (decarboxylating) subunit 1 (443 aa).

Belongs to the GcvP family. N-terminal subunit subfamily. As to quaternary structure, the glycine cleavage system is composed of four proteins: P, T, L and H. In this organism, the P 'protein' is a heterodimer of two subunits.

It carries out the reaction N(6)-[(R)-lipoyl]-L-lysyl-[glycine-cleavage complex H protein] + glycine + H(+) = N(6)-[(R)-S(8)-aminomethyldihydrolipoyl]-L-lysyl-[glycine-cleavage complex H protein] + CO2. Its function is as follows. The glycine cleavage system catalyzes the degradation of glycine. The P protein binds the alpha-amino group of glycine through its pyridoxal phosphate cofactor; CO(2) is released and the remaining methylamine moiety is then transferred to the lipoamide cofactor of the H protein. The chain is Probable glycine dehydrogenase (decarboxylating) subunit 1 from Desulfovibrio desulfuricans (strain ATCC 27774 / DSM 6949 / MB).